A 969-amino-acid polypeptide reads, in one-letter code: Protein translocase subunit SecA (969 aa).

ATP contacts are provided by residues Q99, 117–121 (GEGKT), and D631.

This sequence belongs to the SecA family. As to quaternary structure, monomer and homodimer. Part of the essential Sec protein translocation apparatus which comprises SecA, SecYEG and auxiliary proteins SecDF. Other proteins may also be involved.

It localises to the cell inner membrane. The protein resides in the cytoplasm. The catalysed reaction is ATP + H2O + cellular proteinSide 1 = ADP + phosphate + cellular proteinSide 2.. Its function is as follows. Part of the Sec protein translocase complex. Interacts with the SecYEG preprotein conducting channel. Has a central role in coupling the hydrolysis of ATP to the transfer of proteins into and across the cell membrane, serving as an ATP-driven molecular motor driving the stepwise translocation of polypeptide chains across the membrane. The protein is Protein translocase subunit SecA of Chlamydia trachomatis serovar A (strain ATCC VR-571B / DSM 19440 / HAR-13).